Here is a 98-residue protein sequence, read N- to C-terminus: Class II hydrophobin 1 (98 aa).

The first 16 residues, 1 to 16, serve as a signal peptide directing secretion; that stretch reads MQFFTTVVLFAAAAMA. 4 disulfides stabilise this stretch: Cys-29–Cys-79, Cys-39–Cys-70, Cys-40–Cys-52, and Cys-80–Cys-92.

This sequence belongs to the cerato-ulmin hydrophobin family. As to quaternary structure, homodimer. Homodimers further self-assemble to form highly ordered films at water-air interfaces through intermolecular interactions. In terms of tissue distribution, expressed in mycelium, conidiating mycelium and aerial hyphae.

Its subcellular location is the secreted. The protein resides in the cell wall. Its function is as follows. Aerial growth, conidiation, and dispersal of filamentous fungi in the environment rely upon a capability of their secreting small amphipathic proteins called hydrophobins (HPBs) with low sequence identity. Class I can self-assemble into an outermost layer of rodlet bundles on aerial cell surfaces, conferring cellular hydrophobicity that supports fungal growth, development and dispersal; whereas Class II form highly ordered films at water-air interfaces through intermolecular interactions but contribute nothing to the rodlet structure. Hyd1 is a class II hydrophobin that plays probably a role during conidiophore development and in intraspecific signaling or hyphal fusion. Hyd1 and Hyd3 are jointly required for conidial hydrophobicity and dispersal, but seem not to be involved in mycelia hydrophobicity. Inhibits conidial germination in environments not suitable for mycelial growth. Not necessary for root adhesion and colonization. This chain is Class II hydrophobin 1, found in Bionectria ochroleuca (Gliocladium roseum).